Consider the following 629-residue polypeptide: Probable potassium transport system protein Kup 3 (629 aa).

Transmembrane regions (helical) follow at residues 20-40 (LSLS…LYTF), 54-74 (VTTI…IASV), 106-126 (PFII…GTIT), 143-163 (PSLK…LFAI), 171-191 (IGKA…ILGA), 212-232 (FLFS…LCAT), 253-273 (WFGL…ALVL), 291-311 (FLLP…QAII), 343-363 (IYIG…IIGF), 372-392 (AYGI…FIAL), 400-420 (IITS…FFAA), and 425-445 (FING…MMYI).

The protein belongs to the HAK/KUP transporter (TC 2.A.72) family.

The protein localises to the cell inner membrane. It carries out the reaction K(+)(in) + H(+)(in) = K(+)(out) + H(+)(out). In terms of biological role, transport of potassium into the cell. Likely operates as a K(+):H(+) symporter. The polypeptide is Probable potassium transport system protein Kup 3 (Legionella pneumophila (strain Paris)).